The sequence spans 304 residues: Small ribosomal subunit protein uS2 (304 aa).

An N-acetylserine modification is found at Ser2. 2 laminin-binding regions span residues 161–180 and 205–229; these read IPCN…MLAR and RDPE…EFQG. [DE]-W-[ST] repeat units lie at residues 230 to 232, 245 to 247, 275 to 277, 284 to 286, and 302 to 304; these read EWS and DWS. Positions 242–304 are laminin-binding; it reads EVADWSEGVA…DWGGATSDWS (63 aa). The segment at 257-304 is disordered; the sequence is IQQFPAGTPAPAPAVKTEDWSTQPATEDWSTAPTAQASDWGGATSDWS. Over residues 276–293 the composition is skewed to polar residues; sequence WSTQPATEDWSTAPTAQA.

Belongs to the universal ribosomal protein uS2 family. Monomer (37LRP) and homodimer (67LR). Component of the small ribosomal subunit. Mature ribosomes consist of a small (40S) and a large (60S) subunit. The 40S subunit contains about 33 different proteins and 1 molecule of RNA (18S). The 60S subunit contains about 49 different proteins and 3 molecules of RNA (28S, 5.8S and 5S). Interacts with rps21. Interacts with several laminins including at least lamb1. Interacts with mdk. Acylated. Acylation may be a prerequisite for conversion of the monomeric 37 kDa laminin receptor precursor (37LRP) to the mature dimeric 67 kDa laminin receptor (67LR), and may provide a mechanism for membrane association. In terms of processing, cleaved by stromelysin-3 (ST3) at the cell surface. Cleavage by stromelysin-3 may be a mechanism to alter cell-extracellular matrix interactions.

It is found in the cell membrane. The protein localises to the cytoplasm. The protein resides in the nucleus. Functionally, required for the assembly and/or stability of the 40S ribosomal subunit. Required for the processing of the 20S rRNA-precursor to mature 18S rRNA in a late step of the maturation of 40S ribosomal subunits. Also functions as a cell surface receptor for laminin. Plays a role in cell adhesion to the basement membrane and in the consequent activation of signaling transduction pathways. May play a role in cell fate determination and tissue morphogenesis. The sequence is that of Small ribosomal subunit protein uS2 (rpsa) from Sparus aurata (Gilthead sea bream).